The following is a 189-amino-acid chain: GMP synthase [glutamine-hydrolyzing] subunit A (189 aa).

The 189-residue stretch at 1 to 189 (MIVILNNGGQ…CKKCGFEFEE (189 aa)) folds into the Glutamine amidotransferase type-1 domain. The Nucleophile role is filled by Cys76. Catalysis depends on residues His163 and Glu165.

In terms of assembly, heterodimer composed of a glutamine amidotransferase subunit (A) and a GMP-binding subunit (B).

It carries out the reaction XMP + L-glutamine + ATP + H2O = GMP + L-glutamate + AMP + diphosphate + 2 H(+). It participates in purine metabolism; GMP biosynthesis; GMP from XMP (L-Gln route): step 1/1. In terms of biological role, catalyzes the synthesis of GMP from XMP. This chain is GMP synthase [glutamine-hydrolyzing] subunit A, found in Methanococcus maripaludis (strain C6 / ATCC BAA-1332).